We begin with the raw amino-acid sequence, 252 residues long: Protein BTG3 (252 aa).

The disordered stretch occupies residues 138 to 162 (VTSDYHSGSSSSDEETSKEMEVKPS).

The protein belongs to the BTG family. In terms of tissue distribution, ubiquitous. High expression in the ventricular zone of the developing central nervous system. High in ovary, testis, prostate, thymus and lung.

Overexpression impairs serum-induced cell cycle progression from the G0/G1 to S phase. This chain is Protein BTG3 (BTG3), found in Homo sapiens (Human).